The following is a 169-amino-acid chain: Protein-export protein SecB (169 aa).

It belongs to the SecB family. Homotetramer, a dimer of dimers. One homotetramer interacts with 1 SecA dimer.

It localises to the cytoplasm. Functionally, one of the proteins required for the normal export of preproteins out of the cell cytoplasm. It is a molecular chaperone that binds to a subset of precursor proteins, maintaining them in a translocation-competent state. It also specifically binds to its receptor SecA. This is Protein-export protein SecB from Alteromonas mediterranea (strain DSM 17117 / CIP 110805 / LMG 28347 / Deep ecotype).